Here is a 347-residue protein sequence, read N- to C-terminus: Anthranilate phosphoribosyltransferase (347 aa).

5-phospho-alpha-D-ribose 1-diphosphate contacts are provided by residues G86, 89–90 (GD), T94, 96–99 (NIST), 114–122 (KHGNRSVSS), and S126. Residue G86 participates in anthranilate binding. S98 contacts Mg(2+). N117 is an anthranilate binding site. Position 172 (R172) interacts with anthranilate. 2 residues coordinate Mg(2+): D230 and E231.

It belongs to the anthranilate phosphoribosyltransferase family. In terms of assembly, homodimer. Mg(2+) is required as a cofactor.

It catalyses the reaction N-(5-phospho-beta-D-ribosyl)anthranilate + diphosphate = 5-phospho-alpha-D-ribose 1-diphosphate + anthranilate. It participates in amino-acid biosynthesis; L-tryptophan biosynthesis; L-tryptophan from chorismate: step 2/5. Catalyzes the transfer of the phosphoribosyl group of 5-phosphorylribose-1-pyrophosphate (PRPP) to anthranilate to yield N-(5'-phosphoribosyl)-anthranilate (PRA). This Shewanella frigidimarina (strain NCIMB 400) protein is Anthranilate phosphoribosyltransferase.